Reading from the N-terminus, the 233-residue chain is uncharacterized protein (233 aa).

It belongs to the methyltransferase superfamily.

This is an uncharacterized protein from Bacillus subtilis (strain 168).